A 279-amino-acid chain; its full sequence is Protein SCO2 homolog, mitochondrial (279 aa).

Residues 73-90 (LVVTLLFGGGIIGTWWYV) traverse the membrane as a helical segment. The Mitochondrial intermembrane segment spans residues 91-279 (HQEKEKRIQM…MKTFVRLFPD (189 aa)). The region spanning 97 to 271 (RIQMQRLEQL…IAESIRNHMK (175 aa)) is the Thioredoxin domain. C145, C149, and H236 together coordinate Cu cation. C145 and C149 are oxidised to a cystine.

It belongs to the SCO1/2 family. In terms of assembly, homodimer.

The protein resides in the mitochondrion inner membrane. Its function is as follows. Copper metallochaperone essential for the synthesis and maturation of cytochrome c oxidase subunit II (MT-CO2/COX2) by facilitating the incorporation of copper into the Cu(A) site of MT-CO2/COX2. Could also act as a thiol-disulfide oxidoreductase to regulate the redox state of the cysteines in SCO1 during maturation of MT-CO2/COX2. This is Protein SCO2 homolog, mitochondrial (sco2) from Danio rerio (Zebrafish).